A 428-amino-acid chain; its full sequence is Glutamate-1-semialdehyde 2,1-aminomutase (428 aa).

Lys265 bears the N6-(pyridoxal phosphate)lysine mark.

The protein belongs to the class-III pyridoxal-phosphate-dependent aminotransferase family. HemL subfamily. Homodimer. Requires pyridoxal 5'-phosphate as cofactor.

It localises to the cytoplasm. The catalysed reaction is (S)-4-amino-5-oxopentanoate = 5-aminolevulinate. It participates in porphyrin-containing compound metabolism; protoporphyrin-IX biosynthesis; 5-aminolevulinate from L-glutamyl-tRNA(Glu): step 2/2. The sequence is that of Glutamate-1-semialdehyde 2,1-aminomutase from Shewanella loihica (strain ATCC BAA-1088 / PV-4).